The primary structure comprises 175 residues: Glutamyl-tRNA(Gln) amidotransferase subunit C, mitochondrial (175 aa).

Belongs to the GatC family. Subunit of the heterotrimeric GatCAB amidotransferase (AdT) complex, composed of A, B and C subunits.

It is found in the mitochondrion. It carries out the reaction L-glutamyl-tRNA(Gln) + L-glutamine + ATP + H2O = L-glutaminyl-tRNA(Gln) + L-glutamate + ADP + phosphate + H(+). Its function is as follows. Allows the formation of correctly charged Gln-tRNA(Gln) through the transamidation of misacylated Glu-tRNA(Gln) in the mitochondria. The reaction takes place in the presence of glutamine and ATP through an activated gamma-phospho-Glu-tRNA(Gln). The protein is Glutamyl-tRNA(Gln) amidotransferase subunit C, mitochondrial of Caenorhabditis elegans.